Consider the following 481-residue polypeptide: Protein JASON (481 aa).

The interval 226–250 (ECDLDQSNSSNSSENGSSRKPEMGG) is disordered. Positions 232 to 241 (SNSSNSSENG) are enriched in low complexity.

Required for normal spindle orientation at male meiosis II and normal formation of tetrad of microspores. Acts as a positive regulator of PS1 in male sporogenesis. Not involved in female meiosis. The polypeptide is Protein JASON (Arabidopsis thaliana (Mouse-ear cress)).